A 140-amino-acid chain; its full sequence is Nucleoside diphosphate kinase (140 aa).

ATP is bound by residues K11, F59, R87, T93, R104, and N114. H117 serves as the catalytic Pros-phosphohistidine intermediate.

This sequence belongs to the NDK family. In terms of assembly, homotetramer. Mg(2+) is required as a cofactor.

The protein localises to the cytoplasm. It carries out the reaction a 2'-deoxyribonucleoside 5'-diphosphate + ATP = a 2'-deoxyribonucleoside 5'-triphosphate + ADP. The catalysed reaction is a ribonucleoside 5'-diphosphate + ATP = a ribonucleoside 5'-triphosphate + ADP. Its function is as follows. Major role in the synthesis of nucleoside triphosphates other than ATP. The ATP gamma phosphate is transferred to the NDP beta phosphate via a ping-pong mechanism, using a phosphorylated active-site intermediate. This chain is Nucleoside diphosphate kinase, found in Cereibacter sphaeroides (strain ATCC 17029 / ATH 2.4.9) (Rhodobacter sphaeroides).